The sequence spans 681 residues: MSPAPMPVTTAEQDRDVVVIDAVVEEVRPPRLPKSHLEDLGPVSDMFPESWEYHPDLIMEFYRKRPLQVLGRLINILFPLLRFILGIWWEKLRGKDPTVSRAKAIQLRELLTNLGPTYIKVGQALSTRPDLVPPVFLDELTTLQDQLPSFPNEVAYRFIEEELGAPAEEIYAELSPEPIAAASLGQVYKGKLKTGEAVAVKVQRPDLVRRITLDIYIMRSLSLWARRSVKRLRSDLVAITDELASRVFEEMNYYQEAINGEKFAQLYGSLPEIYVPSIYWQYTGRRVLTMEWVEGIKLTNIKAIQAQGIDATHLVEVGVQCSLRQLLEHGFFHADPHPGNLLAMADGRLAYLDFGMMSTIQPYQRYGLIEAVVHLVNRDFDSLAKDYVKLDFLKPDTDLKPIIPALGQVFGNALGASVAELNFKSITDQMSAMMYEFPFRVPAYYALIIRSMVTLEGIAIGIDPNFKVLSKAYPYIAKRLLTDQSEELRTSLKELLFKEGSFRWNRLENLLRNAKNSPGFDFDYVLNEATEFLLSDRGQFIRDRLVAELVNSIDQLGRNTWQQVSHNIQERISFLGDLGNGNGKAHQTKTIKVVPQPAIAQQEETWQHLQNLWQILKETPGFDPLKFVPVLSQIIVNPTSRRMGQQVAEGLLQKAIARVIRQWALALESQPNPAIKIRNAA.

It belongs to the protein kinase superfamily. ADCK protein kinase family.

This is an uncharacterized protein from Synechocystis sp. (strain ATCC 27184 / PCC 6803 / Kazusa).